The following is a 137-amino-acid chain: Small ribosomal subunit protein uS12 (137 aa).

The segment at 1–57 is disordered; the sequence is MPTINQLVRKPRKSKVEKSKSPALNVGYNSHKKVQTNVSSPQKRGVATRVGTMTPKK. Position 102 is a 3-methylthioaspartic acid (aspartate 102).

The protein belongs to the universal ribosomal protein uS12 family. Part of the 30S ribosomal subunit. Contacts proteins S8 and S17. May interact with IF1 in the 30S initiation complex.

Its function is as follows. With S4 and S5 plays an important role in translational accuracy. In terms of biological role, interacts with and stabilizes bases of the 16S rRNA that are involved in tRNA selection in the A site and with the mRNA backbone. Located at the interface of the 30S and 50S subunits, it traverses the body of the 30S subunit contacting proteins on the other side and probably holding the rRNA structure together. The combined cluster of proteins S8, S12 and S17 appears to hold together the shoulder and platform of the 30S subunit. This is Small ribosomal subunit protein uS12 from Streptococcus sanguinis (strain SK36).